A 164-amino-acid chain; its full sequence is 17.8 kDa class II heat shock protein (164 aa).

A sHSP domain is found at 48–164 (DARAMAATPA…KPKTIEVKVA (117 aa)).

It belongs to the small heat shock protein (HSP20) family.

The protein localises to the cytoplasm. This is 17.8 kDa class II heat shock protein from Zea mays (Maize).